Here is a 274-residue protein sequence, read N- to C-terminus: Ribosome biogenesis protein UTP30 (274 aa).

The protein belongs to the universal ribosomal protein uL1 family. Highly divergent. In terms of assembly, component of the 90S pre-ribosomes. Interacts with FAF1.

The protein resides in the nucleus. Its subcellular location is the nucleolus. In terms of biological role, involved in rRNA-processing and ribosome biosynthesis. The sequence is that of Ribosome biogenesis protein UTP30 (UTP30) from Saccharomyces cerevisiae (strain ATCC 204508 / S288c) (Baker's yeast).